Reading from the N-terminus, the 314-residue chain is MLGKGGKRKFDEHEDGLEGKIVSPCDGPSKVSYTLQRQTIFNISLMKLYNHRPLTEPSLQKTVLINNMLRRIQEELKQEGSLRPMFTPSSQPTTEPSDSYREAPPAFSHLASPSSHPCDLGSTTPLEACLTPASLLEDDDDTFCTSQAMQPTAPTKLSPPALLPEKDSFSSALDEIEELCPTSTSTEAATAATDSVKGTSSEAGTQKLDGPQESRADDSKLMDSLPGNFEITTSTGFLTDLTLDDILFADIDTSMYDFDPCTSSSGTASKMAPVSADDLLKTLAPYSSQPVTPSQPFKMDLTELDHIMEVLVGS.

The SERTA domain occupies 33–80; the sequence is YTLQRQTIFNISLMKLYNHRPLTEPSLQKTVLINNMLRRIQEELKQEG. Disordered stretches follow at residues 77-119 and 181-222; these read KQEG…HPCD and PTST…SKLM. The span at 87–97 shows a compositional bias: polar residues; the sequence is TPSSQPTTEPS. Positions 182-193 are enriched in low complexity; that stretch reads TSTSTEAATAAT. Residues 210 to 221 are compositionally biased toward basic and acidic residues; sequence GPQESRADDSKL. The required for transactivation activity stretch occupies residues 235–311; sequence TGFLTDLTLD…TELDHIMEVL (77 aa). The Nuclear export signal (NES) motif lies at 238–243; it reads LTDLTL.

In terms of assembly, interacts with XPO1; which mediates nuclear export. Interacts with TFDP1; modulates transactivation activity of TFDP1/E2F complexes. In terms of processing, polyubiquitinated, which promotes proteasomal degradation. In terms of tissue distribution, expressed in adipose tissue.

The protein localises to the nucleus. It is found in the cytoplasm. Functionally, acts at E2F-responsive promoters as coregulator to integrate signals provided by PHD- and/or bromodomain-containing transcription factors. May act as coactivator as well as corepressor of E2F1-TFDP1 and E2F4-TFDP1 complexes on E2F consensus binding sites, which would activate or inhibit E2F-target genes expression. Modulates fat storage by down-regulating the expression of key genes involved in adipocyte lipolysis, thermogenesis and oxidative metabolism. The chain is SERTA domain-containing protein 2 (SERTAD2) from Homo sapiens (Human).